We begin with the raw amino-acid sequence, 225 residues long: ATP-dependent dethiobiotin synthetase BioD (225 aa).

12-17 (EVGKTY) contacts ATP. A Mg(2+)-binding site is contributed by threonine 16. Lysine 37 is an active-site residue. Serine 41 is a binding site for substrate. Residues aspartate 52, 114–117 (EGAG), and 174–175 (NC) contribute to the ATP site. 2 residues coordinate Mg(2+): aspartate 52 and glutamate 114.

Belongs to the dethiobiotin synthetase family. In terms of assembly, homodimer. Mg(2+) serves as cofactor.

The protein resides in the cytoplasm. It carries out the reaction (7R,8S)-7,8-diammoniononanoate + CO2 + ATP = (4R,5S)-dethiobiotin + ADP + phosphate + 3 H(+). It participates in cofactor biosynthesis; biotin biosynthesis; biotin from 7,8-diaminononanoate: step 1/2. Catalyzes a mechanistically unusual reaction, the ATP-dependent insertion of CO2 between the N7 and N8 nitrogen atoms of 7,8-diaminopelargonic acid (DAPA, also called 7,8-diammoniononanoate) to form a ureido ring. In Francisella tularensis subsp. mediasiatica (strain FSC147), this protein is ATP-dependent dethiobiotin synthetase BioD.